We begin with the raw amino-acid sequence, 145 residues long: D-aminoacyl-tRNA deacylase (145 aa).

The Gly-cisPro motif, important for rejection of L-amino acids signature appears at 137-138; the sequence is GP.

It belongs to the DTD family. In terms of assembly, homodimer.

Its subcellular location is the cytoplasm. It catalyses the reaction glycyl-tRNA(Ala) + H2O = tRNA(Ala) + glycine + H(+). The enzyme catalyses a D-aminoacyl-tRNA + H2O = a tRNA + a D-alpha-amino acid + H(+). In terms of biological role, an aminoacyl-tRNA editing enzyme that deacylates mischarged D-aminoacyl-tRNAs. Also deacylates mischarged glycyl-tRNA(Ala), protecting cells against glycine mischarging by AlaRS. Acts via tRNA-based rather than protein-based catalysis; rejects L-amino acids rather than detecting D-amino acids in the active site. By recycling D-aminoacyl-tRNA to D-amino acids and free tRNA molecules, this enzyme counteracts the toxicity associated with the formation of D-aminoacyl-tRNA entities in vivo and helps enforce protein L-homochirality. This Lactobacillus acidophilus (strain ATCC 700396 / NCK56 / N2 / NCFM) protein is D-aminoacyl-tRNA deacylase.